The chain runs to 1005 residues: DNA-directed RNA polymerase subunit beta (1005 aa).

The protein belongs to the RNA polymerase beta chain family. As to quaternary structure, in plastids the minimal PEP RNA polymerase catalytic core is composed of four subunits: alpha, beta, beta', and beta''. When a (nuclear-encoded) sigma factor is associated with the core the holoenzyme is formed, which can initiate transcription (Potential).

The protein resides in the plastid. The protein localises to the apicoplast. It catalyses the reaction RNA(n) + a ribonucleoside 5'-triphosphate = RNA(n+1) + diphosphate. Functionally, DNA-dependent RNA polymerase catalyzes the transcription of DNA into RNA using the four ribonucleoside triphosphates as substrates. This chain is DNA-directed RNA polymerase subunit beta (rpoB), found in Theileria parva (East coast fever infection agent).